The following is a 282-amino-acid chain: Bicarbonate transport ATP-binding protein CmpD (282 aa).

The region spanning 24 to 257 is the ABC transporter domain; sequence LTIENVSKVY…RPRDRDRIME (234 aa). Residue 60 to 67 participates in ATP binding; sequence GHSGCGKS.

It belongs to the ABC transporter superfamily. Nitrate/nitrite/cyanate uptake transporter (NitT) (TC 3.A.1.16) family. The complex is composed of two ATP-binding proteins (CmpC and CmpD), a transmembrane protein (CmpB) and a solute-binding protein (CmpA).

Its subcellular location is the cell inner membrane. Part of the ABC transporter complex CmpABCD involved in bicarbonate transport. Responsible for energy coupling to the transport system. The chain is Bicarbonate transport ATP-binding protein CmpD (cmpD) from Synechocystis sp. (strain ATCC 27184 / PCC 6803 / Kazusa).